Reading from the N-terminus, the 417-residue chain is Probable medium-chain specific acyl-CoA dehydrogenase 10, mitochondrial (417 aa).

A mitochondrion-targeting transit peptide spans M1 to S15. Residues Y148 to S157 and W181 to T183 each bind FAD. A substrate-binding site is contributed by S157. Residue D268–R271 participates in substrate binding. Residues H306–Q307 and Q364–G368 contribute to the FAD site. The active-site Proton acceptor is the E391. Substrate is bound at residue G392. Residue T393–Q395 participates in FAD binding.

It belongs to the acyl-CoA dehydrogenase family. In terms of assembly, homotetramer. The cofactor is FAD. In terms of tissue distribution, expressed in the epidermis and intestine.

The protein resides in the mitochondrion matrix. It catalyses the reaction a medium-chain 2,3-saturated fatty acyl-CoA + oxidized [electron-transfer flavoprotein] + H(+) = a medium-chain (2E)-enoyl-CoA + reduced [electron-transfer flavoprotein]. The protein operates within lipid metabolism; mitochondrial fatty acid beta-oxidation. This enzyme is specific for acyl chain lengths of 4 to 16. In Caenorhabditis elegans, this protein is Probable medium-chain specific acyl-CoA dehydrogenase 10, mitochondrial (acdh-10).